The following is a 599-amino-acid chain: Ecdysone oxidase (599 aa).

FAD is bound by residues 137–140 and 537–538; these read NDMV and WH. Residue His-538 is the Proton acceptor of the active site.

This sequence belongs to the GMC oxidoreductase family. It depends on FAD as a cofactor.

The catalysed reaction is ecdysone + O2 = 3-dehydroecdysone + H2O2. Its function is as follows. Involved in the inactivation of ecdysteroid molting hormones by converting ecdysteroids into 3-dehydroecdysteroids. The chain is Ecdysone oxidase from Spodoptera littoralis (Egyptian cotton leafworm).